Reading from the N-terminus, the 124-residue chain is Holo-[acyl-carrier-protein] synthase (124 aa).

2 residues coordinate Mg(2+): Asp8 and Glu55.

Belongs to the P-Pant transferase superfamily. AcpS family. Mg(2+) serves as cofactor.

It localises to the cytoplasm. The enzyme catalyses apo-[ACP] + CoA = holo-[ACP] + adenosine 3',5'-bisphosphate + H(+). Functionally, transfers the 4'-phosphopantetheine moiety from coenzyme A to a Ser of acyl-carrier-protein. In Desulfovibrio desulfuricans (strain ATCC 27774 / DSM 6949 / MB), this protein is Holo-[acyl-carrier-protein] synthase.